Here is a 48-residue protein sequence, read N- to C-terminus: uncharacterized protein (48 aa).

A helical transmembrane segment spans residues 20–37; it reads ILASPLFFANYVLHAAIH.

It is found in the membrane. This is an uncharacterized protein from Saccharomyces cerevisiae (strain ATCC 204508 / S288c) (Baker's yeast).